A 492-amino-acid polypeptide reads, in one-letter code: Endoglycoceramidase I (492 aa).

Positions 1 to 14 are cleaved as a signal peptide; that stretch reads MRKTVVAFAAAIAA. The N-palmitoyl cysteine moiety is linked to residue Cys15. A lipid anchor (S-diacylglycerol cysteine) is attached at Cys15. Substrate-binding positions include Lys61, Asp62, 131-133, and 213-214; these read HQD and NE. Glu214 serves as the catalytic Proton donor. Cys224 and Cys229 are joined by a disulfide. Substrate is bound by residues Asn265, Gln298, and Tyr302. Cys294 and Cys313 are joined by a disulfide. Glu339 functions as the Nucleophile in the catalytic mechanism. Trp365 contributes to the substrate binding site. Positions 467-492 are disordered; sequence NRPGSAGAEVPDGPIETSSSGSSGSS.

The protein belongs to the glycosyl hydrolase 5 (cellulase A) family.

It is found in the secreted. The protein localises to the membrane. It catalyses the reaction an oligoglycosyl-(1-&gt;4)-beta-D-glucosyl-(1&lt;-&gt;1)-ceramide + H2O = an oligoglycosyl-(1-&gt;4)-D-glucose + an N-acyl-sphingoid base. It carries out the reaction a ganglioside GM3 + H2O = N-acetyl-alpha-neuraminosyl-(2-&gt;3)-beta-D-galactosyl-(1-&gt;4)-D-glucose + an N-acyl-sphingoid base. The enzyme catalyses a ganglioside GM1 + H2O = beta-D-Gal-(1-&gt;3)-beta-D-GalNAc-(1-&gt;4)-[alpha-Neu5Ac-(2-&gt;3)]-beta-D-Gal-(1-&gt;4)-D-Glc + an N-acyl-sphingoid base. The catalysed reaction is a ganglioside Fuc-GM1 + H2O = alpha-Fuc-(1-&gt;2)-beta-Gal-(1-&gt;3)-beta-GalNAc-(1-&gt;4)-[alpha-Neu5Ac-(2-&gt;3)]-beta-Gal-(1-&gt;4)-Glc + an N-acyl-sphingoid base. It catalyses the reaction a beta-D-galactosyl-(1-&gt;4)-beta-D-glucosyl-(1&lt;-&gt;1)-ceramide + H2O = lactose + an N-acyl-sphingoid base. Its function is as follows. Hydrolyzes glycosphingolipids; exhibits broad substrate specificity including monosialodihexosylganglioside (GM3), monosialotetrahexosylganglioside (GM1), fucosyl-GM1, lactosylceramide, globotriosylceramide, globotetraosylceramide, ganglioside GD1a, and ganglioside GD1b. No activity towards glucosylceramide and galactosylceramide. The protein is Endoglycoceramidase I of Rhodococcus hoagii (strain 103S) (Rhodococcus equi).